The primary structure comprises 743 residues: 1,4-alpha-glucan branching enzyme GlgB 2 (743 aa).

A disordered region spans residues 1-23; it reads MSERQGGQEQRTEADGMTTEGIS. Residue aspartate 422 is the Nucleophile of the active site. The active-site Proton donor is glutamate 475.

This sequence belongs to the glycosyl hydrolase 13 family. GlgB subfamily. In terms of assembly, monomer.

The catalysed reaction is Transfers a segment of a (1-&gt;4)-alpha-D-glucan chain to a primary hydroxy group in a similar glucan chain.. It functions in the pathway glycan biosynthesis; glycogen biosynthesis. Catalyzes the formation of the alpha-1,6-glucosidic linkages in glycogen by scission of a 1,4-alpha-linked oligosaccharide from growing alpha-1,4-glucan chains and the subsequent attachment of the oligosaccharide to the alpha-1,6 position. The sequence is that of 1,4-alpha-glucan branching enzyme GlgB 2 from Xanthomonas euvesicatoria pv. vesicatoria (strain 85-10) (Xanthomonas campestris pv. vesicatoria).